A 492-amino-acid polypeptide reads, in one-letter code: Glutamyl-tRNA(Gln) amidotransferase subunit A (492 aa).

Active-site charge relay system residues include K79 and S154. The active-site Acyl-ester intermediate is the S178.

This sequence belongs to the amidase family. GatA subfamily. In terms of assembly, heterotrimer of A, B and C subunits.

The catalysed reaction is L-glutamyl-tRNA(Gln) + L-glutamine + ATP + H2O = L-glutaminyl-tRNA(Gln) + L-glutamate + ADP + phosphate + H(+). In terms of biological role, allows the formation of correctly charged Gln-tRNA(Gln) through the transamidation of misacylated Glu-tRNA(Gln) in organisms which lack glutaminyl-tRNA synthetase. The reaction takes place in the presence of glutamine and ATP through an activated gamma-phospho-Glu-tRNA(Gln). The protein is Glutamyl-tRNA(Gln) amidotransferase subunit A of Acinetobacter baylyi (strain ATCC 33305 / BD413 / ADP1).